The sequence spans 265 residues: Apolipoprotein A-I (265 aa).

Positions 1 to 16 (MKAAVLIWLFLMGSQA) are cleaved as a signal peptide. 2 consecutive repeat copies span residues 66 to 87 (LKLL…EQLG) and 88 to 109 (PVTQ…QEMS). The 10 X approximate tandem repeats stretch occupies residues 66–265 (LKLLDNWDSL…EEYTKKLSSQ (200 aa)). M108 carries the post-translational modification Methionine sulfoxide. Residues 110 to 120 (KDLEEVKAQVQ) form a 3; half-length repeat. A run of 5 repeats spans residues 121–142 (PYLD…QKLE), 143–164 (PLRT…EKLS), 165–186 (PLAE…TQLA), 187–208 (PYSD…ENSG), and 209–230 (ASLA…EKAK). M134 carries the post-translational modification Methionine sulfoxide. The 9; half-length repeat unit spans residues 231-241 (PALDDLRQGLL). Repeat unit 10 spans residues 242–265 (PVLESFKVSFLSALEEYTKKLSSQ).

It belongs to the apolipoprotein A1/A4/E family. Homodimer. Interacts with APOA1BP and CLU. Component of a sperm activating protein complex (SPAP), consisting of APOA1, an immunoglobulin heavy chain, an immunoglobulin light chain and albumin. Interacts with NDRG1. Interacts with SCGB3A2. Interacts with NAXE and YJEFN3. In terms of processing, glycosylated. Post-translationally, palmitoylated. Phosphorylation sites are present in the extracellular medium.

It is found in the secreted. Participates in the reverse transport of cholesterol from tissues to the liver for excretion by promoting cholesterol efflux from tissues and by acting as a cofactor for the lecithin cholesterol acyltransferase (LCAT). As part of the SPAP complex, activates spermatozoa motility. In Aotus nancymaae (Ma's night monkey), this protein is Apolipoprotein A-I (APOA1).